The primary structure comprises 121 residues: Ribonuclease P protein component (121 aa).

It belongs to the RnpA family. As to quaternary structure, consists of a catalytic RNA component (M1 or rnpB) and a protein subunit.

The catalysed reaction is Endonucleolytic cleavage of RNA, removing 5'-extranucleotides from tRNA precursor.. Functionally, RNaseP catalyzes the removal of the 5'-leader sequence from pre-tRNA to produce the mature 5'-terminus. It can also cleave other RNA substrates such as 4.5S RNA. The protein component plays an auxiliary but essential role in vivo by binding to the 5'-leader sequence and broadening the substrate specificity of the ribozyme. The protein is Ribonuclease P protein component of Alcanivorax borkumensis (strain ATCC 700651 / DSM 11573 / NCIMB 13689 / SK2).